Reading from the N-terminus, the 252-residue chain is UPF0246 protein Fjoh_4905 (252 aa).

This sequence belongs to the UPF0246 family.

This is UPF0246 protein Fjoh_4905 from Flavobacterium johnsoniae (strain ATCC 17061 / DSM 2064 / JCM 8514 / BCRC 14874 / CCUG 350202 / NBRC 14942 / NCIMB 11054 / UW101) (Cytophaga johnsonae).